Consider the following 153-residue polypeptide: Proline-rich membrane anchor 1 (153 aa).

An N-terminal signal peptide occupies residues 1–35; it reads MLLRDLVLRRGCCWSSLLLHCALHPLWGFVQVTHG. Topologically, residues 36-92 are extracellular; it reads EPQKSCSKVTDSCRHVCQCRPPPPLPPPPPPPPPPRLLSAPAPNSTSCPTEESWWSG. The region spanning 56 to 70 is the PRAD domain; sequence PPPPLPPPPPPPPPP. The segment covering 59-71 has biased composition (pro residues); that stretch reads PLPPPPPPPPPPR. The tract at residues 59–79 is disordered; the sequence is PLPPPPPPPPPPRLLSAPAPN. Asparagine 79 carries an N-linked (GlcNAc...) asparagine glycan. Residues 93 to 113 traverse the membrane as a helical segment; that stretch reads LVIIIAVCCASLVFLTVLVII. Residues 114–153 are Cytoplasmic-facing; the sequence is CYKAIKRKPLRKDENGTSVAEYPMSASQSNKGVDVNNAVV.

As to quaternary structure, interacts with ACHE, probably through disulfide bonds.

It localises to the cell membrane. The protein resides in the cell junction. It is found in the synapse. In terms of biological role, required to anchor acetylcholinesterase (ACHE) to the basal lamina of the neuromuscular junction and to the membrane of neuronal synapses in brain. Also able to organize ACHE into tetramers. The protein is Proline-rich membrane anchor 1 (PRIMA1) of Homo sapiens (Human).